A 597-amino-acid polypeptide reads, in one-letter code: tRNA uridine 5-carboxymethylaminomethyl modification enzyme MnmG (597 aa).

Residue 11 to 16 coordinates FAD; it reads GAGHAG. Residue 275-289 coordinates NAD(+); it reads SPRYCPSIEEKIERY.

The protein belongs to the MnmG family. Homodimer. Heterotetramer of two MnmE and two MnmG subunits. FAD is required as a cofactor.

The protein localises to the cytoplasm. Functionally, NAD-binding protein involved in the addition of a carboxymethylaminomethyl (cmnm) group at the wobble position (U34) of certain tRNAs, forming tRNA-cmnm(5)s(2)U34. In Endomicrobium trichonymphae, this protein is tRNA uridine 5-carboxymethylaminomethyl modification enzyme MnmG.